Consider the following 218-residue polypeptide: uncharacterized protein (218 aa).

An RING-type zinc finger spans residues 154-199; sequence CFICTMEYSRTDKNLHPIILNCGHNLCRSCINKLTGNGIVKCPFDR.

This is an uncharacterized protein from Caenorhabditis elegans.